Consider the following 225-residue polypeptide: UPF0758 protein BPP1850 (225 aa).

The MPN domain maps to 103 to 225; that stretch reads ALANPDLVRR…TVSMAAQGHL (123 aa). Positions 174, 176, and 187 each coordinate Zn(2+). Residues 174 to 187 carry the JAMM motif motif; that stretch reads HNHPGGTAAASAAD.

This sequence belongs to the UPF0758 family.

The polypeptide is UPF0758 protein BPP1850 (Bordetella parapertussis (strain 12822 / ATCC BAA-587 / NCTC 13253)).